A 361-amino-acid polypeptide reads, in one-letter code: Histidine biosynthesis bifunctional protein HisB (361 aa).

Positions 1–172 are histidinol-phosphatase; that stretch reads MSQPTLFIDR…PKTTACERPP (172 aa). Residue Asp9 is the Nucleophile of the active site. Asp9 and Asp11 together coordinate Mg(2+). The active-site Proton donor is the Asp11. Cys92, His94, Cys100, and Cys102 together coordinate Zn(2+). Asp129 contacts Mg(2+). An imidazoleglycerol-phosphate dehydratase region spans residues 173-361; it reads RYAEVVRTTK…NELPSSKGVL (189 aa).

It in the N-terminal section; belongs to the histidinol-phosphatase family. The protein in the C-terminal section; belongs to the imidazoleglycerol-phosphate dehydratase family. Mg(2+) is required as a cofactor. It depends on Zn(2+) as a cofactor.

It is found in the cytoplasm. It catalyses the reaction D-erythro-1-(imidazol-4-yl)glycerol 3-phosphate = 3-(imidazol-4-yl)-2-oxopropyl phosphate + H2O. It carries out the reaction L-histidinol phosphate + H2O = L-histidinol + phosphate. It participates in amino-acid biosynthesis; L-histidine biosynthesis; L-histidine from 5-phospho-alpha-D-ribose 1-diphosphate: step 6/9. It functions in the pathway amino-acid biosynthesis; L-histidine biosynthesis; L-histidine from 5-phospho-alpha-D-ribose 1-diphosphate: step 8/9. This is Histidine biosynthesis bifunctional protein HisB from Actinobacillus pleuropneumoniae serotype 7 (strain AP76).